Here is a 1400-residue protein sequence, read N- to C-terminus: S phase cyclin A-associated protein in the endoplasmic reticulum (1400 aa).

4 disordered regions span residues glutamate 36–lysine 61, valine 226–arginine 277, proline 517–lysine 550, and arginine 701–aspartate 723. Over residues threonine 231 to glutamine 243 the composition is skewed to polar residues. The span at threonine 539–lysine 550 shows a compositional bias: basic and acidic residues. A C2H2-type zinc finger spans residues lysine 792–histidine 816. Position 832 is a phosphoserine (serine 832).

Interacts with CCNA2/CDK2 complex, but not with CCNA2/CDC2, CCNB1/CDC2 or CCNE1/CDK2 complexes, at multiple phases of the cell cycle, including S and G2/M. Phosphorylated in vitro by the CCNA2/CDK2 complex. In terms of tissue distribution, widely expressed with high expression in testis. Isoform 1 is detected in various tissues, including retina, fetal and adult brain. Isoform 2 is expressed in the retina at high levels, and in the brain at very low levels.

The protein localises to the endoplasmic reticulum. It is found in the nucleus. In terms of biological role, CCNA2/CDK2 regulatory protein that transiently maintains CCNA2 in the cytoplasm. This Homo sapiens (Human) protein is S phase cyclin A-associated protein in the endoplasmic reticulum.